A 550-amino-acid chain; its full sequence is CTP synthase (550 aa).

The segment at 1-270 (MTKFVFVTGG…DRLICEELRL (270 aa)) is amidoligase domain. Ser-13 is a CTP binding site. Ser-13 provides a ligand contact to UTP. Residues 14–19 (SLGKGI) and Asp-71 each bind ATP. Mg(2+)-binding residues include Asp-71 and Glu-144. CTP is bound by residues 151-153 (DIE), 191-196 (KTKPTQ), and Lys-227. UTP-binding positions include 191–196 (KTKPTQ) and Lys-227. Residues 295–547 (TIGMVGKYVD…VEAALASQQR (253 aa)) form the Glutamine amidotransferase type-1 domain. Gly-356 is an L-glutamine binding site. Residue Cys-383 is the Nucleophile; for glutamine hydrolysis of the active site. Residues 384 to 387 (LGMQ), Glu-407, and Arg-473 each bind L-glutamine. Catalysis depends on residues His-520 and Glu-522.

It belongs to the CTP synthase family. As to quaternary structure, homotetramer.

The catalysed reaction is UTP + L-glutamine + ATP + H2O = CTP + L-glutamate + ADP + phosphate + 2 H(+). It catalyses the reaction L-glutamine + H2O = L-glutamate + NH4(+). It carries out the reaction UTP + NH4(+) + ATP = CTP + ADP + phosphate + 2 H(+). Its pathway is pyrimidine metabolism; CTP biosynthesis via de novo pathway; CTP from UDP: step 2/2. Allosterically activated by GTP, when glutamine is the substrate; GTP has no effect on the reaction when ammonia is the substrate. The allosteric effector GTP functions by stabilizing the protein conformation that binds the tetrahedral intermediate(s) formed during glutamine hydrolysis. Inhibited by the product CTP, via allosteric rather than competitive inhibition. Catalyzes the ATP-dependent amination of UTP to CTP with either L-glutamine or ammonia as the source of nitrogen. Regulates intracellular CTP levels through interactions with the four ribonucleotide triphosphates. This chain is CTP synthase, found in Cupriavidus taiwanensis (strain DSM 17343 / BCRC 17206 / CCUG 44338 / CIP 107171 / LMG 19424 / R1) (Ralstonia taiwanensis (strain LMG 19424)).